Here is a 248-residue protein sequence, read N- to C-terminus: MKRMEANKIKLINEDNLRLDGRSFNELRPIKIQAGVLNRADGSAYIEWGGNKIMVGVYGPKEAYPKHSQDIDHAIVKARYNMAAFSVDERKRPGPDRRTMEISKVISEALSSSIMIEQFPRAEIDVYIEVLQADAGTRIAGLTAATVALADAGVPMRDMVVGCTAGKVDGHMVLDLSKEEDNYGEADIPIAIMPKTGDIVLMQMDGDVTEDELYQAMDMIFEATKRISQIQREALLNKYKIQDIGEGE.

It belongs to the RNase PH family. Rrp41 subfamily. As to quaternary structure, component of the archaeal exosome complex. Forms a hexameric ring-like arrangement composed of 3 Rrp41-Rrp42 heterodimers. The hexameric ring associates with a trimer of Rrp4 and/or Csl4 subunits.

It is found in the cytoplasm. Its function is as follows. Catalytic component of the exosome, which is a complex involved in RNA degradation. Has 3'-&gt;5' exoribonuclease activity. Can also synthesize heteromeric RNA-tails. This Thermoplasma acidophilum (strain ATCC 25905 / DSM 1728 / JCM 9062 / NBRC 15155 / AMRC-C165) protein is Exosome complex component Rrp41.